Consider the following 161-residue polypeptide: N5-carboxyaminoimidazole ribonucleotide mutase (161 aa).

Substrate is bound by residues Ser-9, Asp-12, and Arg-39.

It belongs to the AIR carboxylase family. Class I subfamily.

The catalysed reaction is 5-carboxyamino-1-(5-phospho-D-ribosyl)imidazole + H(+) = 5-amino-1-(5-phospho-D-ribosyl)imidazole-4-carboxylate. It functions in the pathway purine metabolism; IMP biosynthesis via de novo pathway; 5-amino-1-(5-phospho-D-ribosyl)imidazole-4-carboxylate from 5-amino-1-(5-phospho-D-ribosyl)imidazole (N5-CAIR route): step 2/2. Functionally, catalyzes the conversion of N5-carboxyaminoimidazole ribonucleotide (N5-CAIR) to 4-carboxy-5-aminoimidazole ribonucleotide (CAIR). The protein is N5-carboxyaminoimidazole ribonucleotide mutase of Vibrio parahaemolyticus serotype O3:K6 (strain RIMD 2210633).